Consider the following 149-residue polypeptide: Snake venom vascular endothelial growth factor toxin 2 (149 aa).

The N-terminal stretch at 1-24 (MAAYLLAVAILFCIQGWPSGTVQG) is a signal peptide. Pyrrolidone carboxylic acid is present on Gln25. 3 disulfides stabilise this stretch: Cys38–Cys80, Cys69–Cys115, and Cys73–Cys117. Residues 118 to 149 (RPRSGRVNSGKRKRNPEEGGAESQVPLGLTSF) form a disordered region.

The protein belongs to the PDGF/VEGF growth factor family. Snake venom VEGF subfamily. Homodimer; disulfide-linked. Interacts with VEGF receptor-1 (FLT1) with a high affinity, whereas it binds to VEGF receptor-2 (KDR) with a low affinity. Does not bind VEGF receptor-3 (FLT4). As to expression, expressed by the venom gland.

The protein localises to the secreted. Its function is as follows. Snake venom VEGFs that may contribute to venom dispersion and prey subjugation by inducing vascular permeability and hypotension. This protein induces an increase in capillary permeability after intradermal injection, as well as a drastic hypotensive effect after intravenous injection. The hypotension is mediated by nitric oxide (NO), which is produced by VEGF-activated endothelium NO synthase. Also induces angiogenesis in vitro. Like other crotalid VEGFs, this protein interacts with VEGF receptor-1 (FLT1) with a high affinity, whereas it binds to VEGF receptor-2 (KDR) with a low affinity. The sequence is that of Snake venom vascular endothelial growth factor toxin 2 from Sistrurus catenatus edwardsii (Desert massasauga).